Consider the following 232-residue polypeptide: Uracil phosphoribosyltransferase (232 aa).

38-42 (KGLVK) serves as a coordination point for GTP. 5-phospho-alpha-D-ribose 1-diphosphate is bound by residues R87, R112, and 140–148 (DPMIATGST). Uracil-binding positions include I204 and 209–211 (GDA). A 5-phospho-alpha-D-ribose 1-diphosphate-binding site is contributed by D210.

It belongs to the UPRTase family. Mg(2+) is required as a cofactor.

It carries out the reaction UMP + diphosphate = 5-phospho-alpha-D-ribose 1-diphosphate + uracil. It functions in the pathway pyrimidine metabolism; UMP biosynthesis via salvage pathway; UMP from uracil: step 1/1. Its activity is regulated as follows. Allosterically activated by GTP. Catalyzes the conversion of uracil and 5-phospho-alpha-D-ribose 1-diphosphate (PRPP) to UMP and diphosphate. This chain is Uracil phosphoribosyltransferase, found in Thermococcus sibiricus (strain DSM 12597 / MM 739).